Here is a 200-residue protein sequence, read N- to C-terminus: Gamma-glutamyl-CDP-amidate hydrolase (200 aa).

One can recognise a Glutamine amidotransferase type-1 domain in the interval 20–200 (ECLALDWGKL…LKEWFSLIKE (181 aa)). Catalysis depends on Cys101, which acts as the Nucleophile. Catalysis depends on residues His178 and Glu180.

The enzyme catalyses N(5)-(cytidine 5'-diphosphoramidyl)-L-glutamine + H2O = cytidine 5'-diphosphoramidate + L-glutamate + H(+). Its pathway is capsule biogenesis; capsule polysaccharide biosynthesis. Involved in the biosynthesis of the O-methyl phosphoramidate (MeOPN) group found on the capsular polysaccharide (CPS) of C.jejuni. Catalyzes the hydrolysis of CDP-L-glutamine to L-glutamate and cytidine diphosphoramidate. The protein is Gamma-glutamyl-CDP-amidate hydrolase of Campylobacter jejuni subsp. jejuni serotype O:2 (strain ATCC 700819 / NCTC 11168).